We begin with the raw amino-acid sequence, 477 residues long: UDP-sulfoquinovose synthase, chloroplastic (477 aa).

Residues 1–21 (MAHLLSASCPSVISLSSSSSK) form a disordered region. The transit peptide at 1 to 86 (MAHLLSASCP…TNNSSSKPKR (86 aa)) directs the protein to the chloroplast. Residues 95 to 96 (YC), 115 to 119 (DNLVR), 158 to 159 (DI), R184, and N202 each bind NAD(+). R184 lines the substrate pocket. Substrate is bound by residues T228 and Y265. T228 is an active-site residue. Residues Y265 and K269 each contribute to the NAD(+) site. Y265 functions as the Proton acceptor in the catalytic mechanism. K269 is a catalytic residue. Residue Q292 coordinates substrate. An NAD(+)-binding site is contributed by V295. Substrate-binding positions include 322–325 (ALNR), 337–339 (TVY), and 410–412 (RVE).

It belongs to the NAD(P)-dependent epimerase/dehydratase family. As to quaternary structure, homodimer. Requires NAD(+) as cofactor.

The protein resides in the plastid. Its subcellular location is the chloroplast. It carries out the reaction sulfite + UDP-alpha-D-glucose + H(+) = UDP-alpha-D-6-sulfoquinovose + H2O. Its activity is regulated as follows. Concentrations above 100 uM sulfite inhibit the reaction. In terms of biological role, involved in the biosynthesis of sulfolipids found in thylakoid membranes. Converts UDP-glucose and sulfite to the sulfolipid head group precursor UDP-sulfoquinovose. This chain is UDP-sulfoquinovose synthase, chloroplastic (SQD1), found in Arabidopsis thaliana (Mouse-ear cress).